A 246-amino-acid chain; its full sequence is Probable transcriptional regulatory protein APP7_1210 (246 aa).

This sequence belongs to the TACO1 family.

It localises to the cytoplasm. The chain is Probable transcriptional regulatory protein APP7_1210 from Actinobacillus pleuropneumoniae serotype 7 (strain AP76).